The sequence spans 988 residues: Protein SEMI-ROLLED LEAF 2 (988 aa).

The interval 844 to 865 (SVDGGLHESPITNTGSSISKTT) is disordered. Over residues 853-865 (PITNTGSSISKTT) the composition is skewed to polar residues.

As to expression, expressed in root tips, and in the vascular bundles of leaf blades, leaf sheaths, and roots, especially in their sclerenchymatous cells.

It is found in the nucleus. The protein localises to the cytoplasm. Functionally, functions in regulating leaf rolling through abaxial side leaf cell differentiation. May be involved in the transdifferentiation process from mesophyll cells to sclerenchymatous cells. The sequence is that of Protein SEMI-ROLLED LEAF 2 from Oryza sativa subsp. japonica (Rice).